A 51-amino-acid polypeptide reads, in one-letter code: Large ribosomal subunit protein bL33 (51 aa).

This sequence belongs to the bacterial ribosomal protein bL33 family.

The chain is Large ribosomal subunit protein bL33 from Hahella chejuensis (strain KCTC 2396).